The primary structure comprises 243 residues: Ribosomal RNA small subunit methyltransferase G (243 aa).

Residues Gly82, Phe87, 133–134 (AE), and Arg152 each bind S-adenosyl-L-methionine.

It belongs to the methyltransferase superfamily. RNA methyltransferase RsmG family.

The protein resides in the cytoplasm. Its function is as follows. Specifically methylates the N7 position of a guanine in 16S rRNA. This chain is Ribosomal RNA small subunit methyltransferase G, found in Clostridium novyi (strain NT).